The sequence spans 185 residues: Protein GrpE (185 aa).

A disordered region spans residues 1–37 (MSEEKQTPEQEAEVEAQEEAVQADTEEVTQDEQSAFQ).

It belongs to the GrpE family. In terms of assembly, homodimer.

The protein localises to the cytoplasm. Functionally, participates actively in the response to hyperosmotic and heat shock by preventing the aggregation of stress-denatured proteins, in association with DnaK and GrpE. It is the nucleotide exchange factor for DnaK and may function as a thermosensor. Unfolded proteins bind initially to DnaJ; upon interaction with the DnaJ-bound protein, DnaK hydrolyzes its bound ATP, resulting in the formation of a stable complex. GrpE releases ADP from DnaK; ATP binding to DnaK triggers the release of the substrate protein, thus completing the reaction cycle. Several rounds of ATP-dependent interactions between DnaJ, DnaK and GrpE are required for fully efficient folding. In Bacillus pumilus (strain SAFR-032), this protein is Protein GrpE.